A 527-amino-acid polypeptide reads, in one-letter code: tRNA-2-methylthio-N(6)-dimethylallyladenosine synthase (527 aa).

Residues 1-27 (MMNEKQRLQYTAQIETDHPTDKKSALD) form a disordered region. The segment covering 15-27 (ETDHPTDKKSALD) has biased composition (basic and acidic residues). An MTTase N-terminal domain is found at 84–202 (RKFYIRTYGC…LPYILKEAYM (119 aa)). 6 residues coordinate [4Fe-4S] cluster: Cys93, Cys129, Cys163, Cys239, Cys243, and Cys246. One can recognise a Radical SAM core domain in the interval 225-455 (RKGNIKAWVN…NALVNEISAK (231 aa)). One can recognise a TRAM domain in the interval 458 to 521 (KEYEGQVVEV…TWTLNGEMVE (64 aa)).

This sequence belongs to the methylthiotransferase family. MiaB subfamily. In terms of assembly, monomer. The cofactor is [4Fe-4S] cluster.

The protein resides in the cytoplasm. The enzyme catalyses N(6)-dimethylallyladenosine(37) in tRNA + (sulfur carrier)-SH + AH2 + 2 S-adenosyl-L-methionine = 2-methylsulfanyl-N(6)-dimethylallyladenosine(37) in tRNA + (sulfur carrier)-H + 5'-deoxyadenosine + L-methionine + A + S-adenosyl-L-homocysteine + 2 H(+). Its function is as follows. Catalyzes the methylthiolation of N6-(dimethylallyl)adenosine (i(6)A), leading to the formation of 2-methylthio-N6-(dimethylallyl)adenosine (ms(2)i(6)A) at position 37 in tRNAs that read codons beginning with uridine. The protein is tRNA-2-methylthio-N(6)-dimethylallyladenosine synthase of Anoxybacillus flavithermus (strain DSM 21510 / WK1).